Reading from the N-terminus, the 609-residue chain is Autophagy-related protein 22-1 (609 aa).

Helical transmembrane passes span Tyr-95–Ile-115, Thr-117–Ile-137, Leu-151–Val-171, and Met-176–Leu-196. A disordered region spans residues Ala-214–Asp-238. Residues Arg-225–Asp-238 are compositionally biased toward basic and acidic residues. A glycan (N-linked (GlcNAc...) asparagine) is linked at Asn-244. Residues Ile-287–Ala-307 traverse the membrane as a helical segment. A glycan (N-linked (GlcNAc...) asparagine) is linked at Asn-309. The next 3 membrane-spanning stretches (helical) occupy residues Leu-317–Leu-337, Ile-381–Thr-401, and Ala-415–Trp-435. Asn-443 carries an N-linked (GlcNAc...) asparagine glycan. Helical transmembrane passes span Ile-450–Pro-470, Phe-487–Gly-509, Ala-522–Ile-542, and Ala-552–Val-572.

It belongs to the ATG22 family.

It is found in the vacuole membrane. In terms of biological role, vacuolar effluxer which mediate the efflux of amino acids resulting from autophagic degradation. The release of autophagic amino acids allows the maintenance of protein synthesis and viability during nitrogen starvation. The protein is Autophagy-related protein 22-1 (atg22-1) of Neosartorya fischeri (strain ATCC 1020 / DSM 3700 / CBS 544.65 / FGSC A1164 / JCM 1740 / NRRL 181 / WB 181) (Aspergillus fischerianus).